The sequence spans 95 residues: Large ribosomal subunit protein uL23 (95 aa).

Belongs to the universal ribosomal protein uL23 family. Contacts protein L29, and trigger factor when it is bound to the ribosome. Part of the 50S ribosomal subunit.

In terms of biological role, one of the early assembly proteins it binds 23S rRNA. One of the proteins that surrounds the polypeptide exit tunnel on the outside of the ribosome. Forms the main docking site for trigger factor binding to the ribosome. In Geobacillus stearothermophilus (Bacillus stearothermophilus), this protein is Large ribosomal subunit protein uL23.